The primary structure comprises 503 residues: Cytochrome P450 11B1, mitochondrial (503 aa).

A mitochondrion-targeting transit peptide spans 1–24 (MALWAKARVWMAGPWLSLHRARPL). Cys-450 serves as a coordination point for heme.

It belongs to the cytochrome P450 family. Requires heme as cofactor.

The protein localises to the mitochondrion inner membrane. It catalyses the reaction a steroid + 2 reduced [adrenodoxin] + O2 + 2 H(+) = an 11beta-hydroxysteroid + 2 oxidized [adrenodoxin] + H2O. It carries out the reaction 11-deoxycortisol + 2 reduced [adrenodoxin] + O2 + 2 H(+) = cortisol + 2 oxidized [adrenodoxin] + H2O. The catalysed reaction is 21-hydroxyprogesterone + 2 reduced [adrenodoxin] + O2 + 2 H(+) = corticosterone + 2 oxidized [adrenodoxin] + H2O. The enzyme catalyses corticosterone + 2 reduced [adrenodoxin] + O2 + 2 H(+) = 18-hydroxycorticosterone + 2 oxidized [adrenodoxin] + H2O. It catalyses the reaction 18-hydroxycorticosterone + 2 reduced [adrenodoxin] + O2 + 2 H(+) = aldosterone + 2 oxidized [adrenodoxin] + 2 H2O. It carries out the reaction 21-hydroxyprogesterone + 2 reduced [adrenodoxin] + O2 + 2 H(+) = 19-hydroxy-11-deoxycorticosterone + 2 oxidized [adrenodoxin] + H2O. The catalysed reaction is 19-hydroxy-11-deoxycorticosterone + 2 reduced [adrenodoxin] + O2 + 2 H(+) = 19-oxo-11-deoxycorticosterone + 2 oxidized [adrenodoxin] + 2 H2O. Its pathway is steroid biosynthesis; glucocorticoid biosynthesis. The protein operates within steroid hormone biosynthesis. A cytochrome P450 monooxygenase that catalyzes the biosynthesis of aldosterone and other adrenal corticoids. Differing from other species (such as human, rat and mice), it is able to catalyze three sequential oxidative reactions of 11-deoxycorticosterone (21-hydroxyprogesterone), namely 11-beta hydroxylation, followed by two successive oxidations at C18 yielding 18-hydroxy and then 18-oxo intermediates, and ending with the formation of aldosterone. Steroid 11beta, 18- and 19-hydroxylase. Mechanistically, uses molecular oxygen inserting one oxygen atom into a substrate and reducing the second into a water molecule. Two electrons are provided by NADPH via a two-protein mitochondrial transfer system comprising flavoprotein FDXR (adrenodoxin/ferredoxin reductase) and nonheme iron-sulfur protein FDX1 or FDX2 (adrenodoxin/ferredoxin). In Ovis aries (Sheep), this protein is Cytochrome P450 11B1, mitochondrial (CYP11B1).